The chain runs to 451 residues: Phosphoglucosamine mutase (451 aa).

Serine 103 serves as the catalytic Phosphoserine intermediate. Residues serine 103, aspartate 243, aspartate 245, and aspartate 247 each coordinate Mg(2+). Phosphoserine is present on serine 103.

It belongs to the phosphohexose mutase family. Mg(2+) is required as a cofactor. In terms of processing, activated by phosphorylation.

It carries out the reaction alpha-D-glucosamine 1-phosphate = D-glucosamine 6-phosphate. Catalyzes the conversion of glucosamine-6-phosphate to glucosamine-1-phosphate. This Lactobacillus johnsonii (strain CNCM I-12250 / La1 / NCC 533) protein is Phosphoglucosamine mutase.